The primary structure comprises 164 residues: NADH-quinone oxidoreductase subunit I (164 aa).

4Fe-4S ferredoxin-type domains follow at residues 55–85 (LRRYPNGEERCIACKLCEAICPAQAITIDAE) and 95–124 (TRYDIDMTKCIYCGFCQEACPVDAIVEGPN). [4Fe-4S] cluster contacts are provided by Cys65, Cys68, Cys71, Cys75, Cys104, Cys107, Cys110, and Cys114.

Belongs to the complex I 23 kDa subunit family. In terms of assembly, NDH-1 is composed of 14 different subunits. Subunits NuoA, H, J, K, L, M, N constitute the membrane sector of the complex. Requires [4Fe-4S] cluster as cofactor.

Its subcellular location is the cell inner membrane. The catalysed reaction is a quinone + NADH + 5 H(+)(in) = a quinol + NAD(+) + 4 H(+)(out). In terms of biological role, NDH-1 shuttles electrons from NADH, via FMN and iron-sulfur (Fe-S) centers, to quinones in the respiratory chain. The immediate electron acceptor for the enzyme in this species is believed to be ubiquinone. Couples the redox reaction to proton translocation (for every two electrons transferred, four hydrogen ions are translocated across the cytoplasmic membrane), and thus conserves the redox energy in a proton gradient. In Dinoroseobacter shibae (strain DSM 16493 / NCIMB 14021 / DFL 12), this protein is NADH-quinone oxidoreductase subunit I.